Consider the following 647-residue polypeptide: MATKIRILPENLTNKIAAGEVVERPASVAKELVENALDAGSKEVVVEIESGGRRLIKVSDTGCGMSRDDALLALERHATSKIATDEDLFSLCTLGFRGEALPSVASVSRLTISTRTSDSVEGTEIYAEGGRIKEVKECGMAVGTVISVRNLFFNTPARLKFMKSAETEGGHVGELLTRLAISRPEVRFTYKNDGKVVFRALDADLKERVATMLGRSIASFLYPVSYQEGGLKVSGLVAAPECSRSAGSHLYTYINGRFIKDKVVQHAILQAYRNFLERGRYPVVAVFIEIAPGEVDVNVHPTKHEVRFREQGRVHDAIQNAVESVLKETPWLKRPAVAAVSRPTEKDAAAARAVLEGSQAPLPVTPQPRPALTSEKPVPAPQAQPQQSSISEARVAEVRELLVDFQPRPQPSLRPQYQGSVTSKEALPYAPMAAPVPVREPETAAPEPDPAAAGYFSSLGVIGQFNASYILCQRGTDLVLIDQHAAHERVAFEKLKGQFAGREVDSQGLLFPETMEFSFRESAVLREHLAELARLGFEFEEFGGNTWLLKGVPQVLSATRYVDTIRDILEELGSLSRSRAFSDIQEDLLARIACHSVVRGKRTLSQVEITALFKQMDETDFSSNCPHGRPVMQTLTLAEVEKMFKRI.

2 disordered regions span residues 356 to 391 (EGSQAPLPVTPQPRPALTSEKPVPAPQAQPQQSSIS) and 407 to 428 (PRPQPSLRPQYQGSVTSKEALP). Polar residues predominate over residues 413-423 (LRPQYQGSVTS).

This sequence belongs to the DNA mismatch repair MutL/HexB family.

In terms of biological role, this protein is involved in the repair of mismatches in DNA. It is required for dam-dependent methyl-directed DNA mismatch repair. May act as a 'molecular matchmaker', a protein that promotes the formation of a stable complex between two or more DNA-binding proteins in an ATP-dependent manner without itself being part of a final effector complex. This is DNA mismatch repair protein MutL from Citrifermentans bemidjiense (strain ATCC BAA-1014 / DSM 16622 / JCM 12645 / Bem) (Geobacter bemidjiensis).